The primary structure comprises 300 residues: N-acetylmannosamine kinase (300 aa).

Residues 5 to 12 (ALDIGGTK) and 132 to 139 (GVGGGIVL) contribute to the ATP site. H156, C166, C168, and C173 together coordinate Zn(2+).

This sequence belongs to the ROK (NagC/XylR) family. NanK subfamily. In terms of assembly, homodimer.

It catalyses the reaction an N-acyl-D-mannosamine + ATP = an N-acyl-D-mannosamine 6-phosphate + ADP + H(+). It participates in amino-sugar metabolism; N-acetylneuraminate degradation; D-fructose 6-phosphate from N-acetylneuraminate: step 2/5. Catalyzes the phosphorylation of N-acetylmannosamine (ManNAc) to ManNAc-6-P. In Haemophilus influenzae (strain ATCC 51907 / DSM 11121 / KW20 / Rd), this protein is N-acetylmannosamine kinase (nanK).